Reading from the N-terminus, the 468-residue chain is MSAKTLYDKLFDSHVVREENGAALIYIDRHLVHEVTSPQAFEGLKMAGRKLWRVNSVLAVPDHNVPTTDRSHGIADPISRLQVETLDQNCRDFGVTEFRMGDVRQGIVHVMGPEQGATLPGMTVVCGDSHTSTHGAFGALAHGIGTSEVEHVMATQCLVQKKSKAMQIRVEGQLGPGVTAKDVALAIIGKIGTAGGTGYAIEFAGSAIRSLSMEGRMTLCNMAIEAGARAGMVAVDDVTINYVKGRPYAPKPEQWDAAVAYWRTLHSDEGAKFDAVVEIKAEDIEPQVTWGTSPEMVTAINSIVPDPSKESDPTKRSGMERALQYMGLQPNTPISDIPIDKVFIGSCTNSRIEDLRAAAAVAKGKHVAPNVKLAMVVPGSGLVKAQAEQEGLDKIFKEAGFEWREPGCSMCLAMNADRLEPGERCASTSNRNFEGRQGAGGRTHLVSPGMAAAAAVAGHFIDVRQLLN.

Positions 347, 408, and 411 each coordinate [4Fe-4S] cluster.

The protein belongs to the aconitase/IPM isomerase family. LeuC type 1 subfamily. As to quaternary structure, heterodimer of LeuC and LeuD. The cofactor is [4Fe-4S] cluster.

The enzyme catalyses (2R,3S)-3-isopropylmalate = (2S)-2-isopropylmalate. It functions in the pathway amino-acid biosynthesis; L-leucine biosynthesis; L-leucine from 3-methyl-2-oxobutanoate: step 2/4. Catalyzes the isomerization between 2-isopropylmalate and 3-isopropylmalate, via the formation of 2-isopropylmaleate. The chain is 3-isopropylmalate dehydratase large subunit from Methylobacillus flagellatus (strain ATCC 51484 / DSM 6875 / VKM B-1610 / KT).